A 1578-amino-acid polypeptide reads, in one-letter code: E3 ubiquitin-protein ligase HECW2 (1578 aa).

The residue at position 48 (serine 48) is a Phosphoserine. Positions 171–298 (MEGGASGSLH…LERQAGDQML (128 aa)) constitute a C2 domain. 2 disordered regions span residues 341 to 453 (HTVN…FPTD) and 496 to 802 (IDDG…PSVR). A compositionally biased stretch (polar residues) spans 386–406 (RTSSTLEIDTEDLISTSSRNS). A compositionally biased stretch (basic and acidic residues) spans 518-532 (ASIHETASLEERLEN). Residues 559–576 (SADQGSTELCSSQEVDQP) show a composition bias toward polar residues. Low complexity predominate over residues 577–593 (TSGADAGASDTSGGSRR). Polar residues-rich tracts occupy residues 597–614 (ETES…SSET), 643–664 (SSCN…SSLE), and 688–708 (PTSS…SSLP). 3 stretches are compositionally biased toward low complexity: residues 721-735 (AAEA…ELGE), 746-755 (AAAAAPAAAA), and 769-782 (AQGA…QEEG). Residues 737–1074 (WQRRGSLEGA…PRPSSTFNTV (338 aa)) form an interaction with TP73 region. A WW 1 domain is found at 813–846 (EALPPNWEARIDSHGRIFYVDHVNRTTTWQRPTA). A coiled-coil region spans residues 853–880 (LQRSNSIQQMEQLNRRYQSIRRTMTNER). Phosphoserine is present on residues serine 858 and serine 915. Positions 991-1024 (LELPRGWEMKHDHQGKAFFVDHNSRTTTFIDPRL) constitute a WW 2 domain. Disordered regions lie at residues 1030–1075 (RPTS…NTVS) and 1167–1193 (CQSP…RAPA). The segment covering 1037–1046 (HRQHLTRQRS) has biased composition (basic residues). A compositionally biased stretch (polar residues) spans 1167–1187 (CQSPRGSPVSSPQNSPGTQRA). Serine 1181 carries the phosphoserine modification. Positions 1243–1578 (SRKDLQRNKL…VEETSTFGLE (336 aa)) constitute an HECT domain. Residue cysteine 1546 is the Glycyl thioester intermediate of the active site.

In terms of assembly, interacts with TP73. Interacts with FZR1.

It localises to the cytoplasm. Its subcellular location is the cytoskeleton. It is found in the spindle. The enzyme catalyses S-ubiquitinyl-[E2 ubiquitin-conjugating enzyme]-L-cysteine + [acceptor protein]-L-lysine = [E2 ubiquitin-conjugating enzyme]-L-cysteine + N(6)-ubiquitinyl-[acceptor protein]-L-lysine.. It participates in protein modification; protein ubiquitination. Functionally, E3 ubiquitin-protein ligase that mediates ubiquitination of TP73. Acts to stabilize TP73 and enhance activation of transcription by TP73. Involved in the regulation of mitotic metaphase/anaphase transition. This chain is E3 ubiquitin-protein ligase HECW2 (Hecw2), found in Mus musculus (Mouse).